Reading from the N-terminus, the 416-residue chain is Tyrosine-protein phosphatase non-receptor type 2 (416 aa).

The Tyrosine-protein phosphatase domain occupies 5–275 (IEREFEELDA…RFSYMAIIEG (271 aa)). A Phosphotyrosine modification is found at Tyr-22. Ser-52 carries the phosphoserine modification. Phosphotyrosine is present on Tyr-68. Residues Asp-182, 216–222 (CSAGIGR), and Gln-260 contribute to the substrate site. Residue Cys-216 is the Phosphocysteine intermediate of the active site. Residue Cys-216 is modified to S-nitrosocysteine. A phosphoserine mark is found at Ser-293, Ser-298, Ser-304, Ser-320, and Ser-339. The endoplasmic reticulum location stretch occupies residues 341–410 (ESILRKRIRE…WTLLFQLNVL (70 aa)). Residues 371 to 410 (ERKRKRWLYWQPILTKMGFVSVILVGALVGWTLLFQLNVL) are may mediate interaction with STX17.

Belongs to the protein-tyrosine phosphatase family. Non-receptor class 1 subfamily. Interacts with RMDN3. Interacts with TMED9. Interacts with STX17; dephosphorylates STX17. Interacts with ITGA1 (via cytoplasmic domain); activates the phosphatase activity towards EGFR. Interacts with TRAF2; probably involved in tumor necrosis factor-mediated signaling. Interacts with MET. Interacts with FAM220A and STAT3; interaction with FAM220A promotes interaction of PTPN2 with transcriptional activator STAT3, leading to dephosphorylation of STAT3 by PTPN2 and negative regulation of STAT3 transcriptional activator activity. Specifically phosphorylated in a cell cycle-dependent manner by cyclin-dependent kinases CDK1 and CDK2. Probably activated through phosphorylation by PKR. As to expression, does not show tissue- or cell-type specificity although levels of transcription show variability. Macrophages showed higher levels of expression than lymphocytes.

The protein resides in the cytoplasm. The protein localises to the endoplasmic reticulum-Golgi intermediate compartment. It is found in the endoplasmic reticulum. Its subcellular location is the nucleus membrane. It localises to the nucleus. The protein resides in the cell membrane. The catalysed reaction is O-phospho-L-tyrosyl-[protein] + H2O = L-tyrosyl-[protein] + phosphate. Its function is as follows. Non-receptor type tyrosine-specific phosphatase that dephosphorylates receptor protein tyrosine kinases including INSR, EGFR, CSF1R, PDGFR. Also dephosphorylates non-receptor protein tyrosine kinases like JAK1, JAK2, JAK3, Src family kinases, STAT1, STAT3 and STAT6 either in the nucleus or the cytoplasm. Negatively regulates numerous signaling pathways and biological processes like hematopoiesis, inflammatory response, cell proliferation and differentiation, and glucose homeostasis. Plays a multifaceted and important role in the development of the immune system. Functions in T-cell receptor signaling through dephosphorylation of FYN and LCK to control T-cells differentiation and activation. Dephosphorylates CSF1R, negatively regulating its downstream signaling and macrophage differentiation. Negatively regulates cytokine (IL2/interleukin-2 and interferon)-mediated signaling through dephosphorylation of the cytoplasmic kinases JAK1, JAK3 and their substrate STAT1, that propagate signaling downstream of the cytokine receptors. Also regulates the IL6/interleukin-6 and IL4/interleukin-4 cytokine signaling through dephosphorylation of STAT3 and STAT6 respectively. In addition to the immune system, it is involved in anchorage-dependent, negative regulation of EGF-stimulated cell growth. Activated by the integrin ITGA1/ITGB1, it dephosphorylates EGFR and negatively regulates EGF signaling. Dephosphorylates PDGFRB and negatively regulates platelet-derived growth factor receptor-beta signaling pathway and therefore cell proliferation. Negatively regulates tumor necrosis factor-mediated signaling downstream via MAPK through SRC dephosphorylation. May also regulate the hepatocyte growth factor receptor signaling pathway through dephosphorylation of the hepatocyte growth factor receptor MET. Also plays an important role in glucose homeostasis. For instance, negatively regulates the insulin receptor signaling pathway through the dephosphorylation of INSR and control gluconeogenesis and liver glucose production through negative regulation of the IL6 signaling pathways. May also bind DNA. The sequence is that of Tyrosine-protein phosphatase non-receptor type 2 (Ptpn2) from Rattus norvegicus (Rat).